The chain runs to 385 residues: Lipid-A-disaccharide synthase (385 aa).

It belongs to the LpxB family.

The enzyme catalyses a lipid X + a UDP-2-N,3-O-bis[(3R)-3-hydroxyacyl]-alpha-D-glucosamine = a lipid A disaccharide + UDP + H(+). The protein operates within bacterial outer membrane biogenesis; LPS lipid A biosynthesis. In terms of biological role, condensation of UDP-2,3-diacylglucosamine and 2,3-diacylglucosamine-1-phosphate to form lipid A disaccharide, a precursor of lipid A, a phosphorylated glycolipid that anchors the lipopolysaccharide to the outer membrane of the cell. This is Lipid-A-disaccharide synthase from Xylella fastidiosa (strain M12).